Here is a 293-residue protein sequence, read N- to C-terminus: Carbapenem-hydrolyzing beta-lactamase KPC (293 aa).

Positions 1 to 24 (MSLYRRLVLLSCLSWPLAGFSATA) are cleaved as a signal peptide. Serine 69 serves as the catalytic Acyl-ester intermediate. The active-site Proton acceptor is the glutamate 167. 233-235 (KTG) lines the substrate pocket.

This sequence belongs to the class-A beta-lactamase family.

It catalyses the reaction a beta-lactam + H2O = a substituted beta-amino acid. With respect to regulation, not inhibited by EDTA, inhibited by clavulanic acid and tazobactam. Functionally, hydrolyzes carbapenems, penicillins, cephalosporins and aztreonam with varying efficiency. This is Carbapenem-hydrolyzing beta-lactamase KPC (bla) from Klebsiella oxytoca.